The sequence spans 428 residues: MRVVILGSGVVGVASAYYLARAGHEVTVIDREAGPALDTSFANAGQISPGYAAPWAAPGVPLKAVKWMFEKHAPLAIRLDGTRFQLQWMWQMLRNCTTERYALNKGRMVRLAEYSRDCLQALRAETAIQYEGRTGGTLQVFRTQQQLDGAAKDIAVLREANVPFELLSSDELKKAEPALAAVSHKLTGGLRLPGDETGDCQLFTTRLAALAEQLGVKFRFNTRIDALAVAGGKIAGVQCGGEMVRADAYVVALGSYSTNLVASLVKIPVYPLKGYSITAPIVDAAKAPVSTVLDETYKIAITRFDDRIRVGGMAEIVGFDKRLRDARRGTLEMCVNDLFPGGGDTAKATFWTGLRPMTPDGTPIVGRTPVPNLFLNTGHGTLGWTMSCGSGQLLADLMSGKKPVIRADDLSVHRYLSETDGEHRPAYA.

FAD is bound at residue 3–17 (VVILGSGVVGVASAY).

Belongs to the DadA oxidoreductase family. It depends on FAD as a cofactor.

The enzyme catalyses a D-alpha-amino acid + A + H2O = a 2-oxocarboxylate + AH2 + NH4(+). Its pathway is amino-acid degradation; D-alanine degradation; NH(3) and pyruvate from D-alanine: step 1/1. Its function is as follows. Oxidative deamination of D-amino acids. The protein is D-amino acid dehydrogenase of Burkholderia pseudomallei (strain 1106a).